The sequence spans 1070 residues: uncharacterized protein (1070 aa).

Disordered stretches follow at residues 66–88, 355–388, 423–483, 667–692, and 735–786; these read EKEK…PGLE, DLDF…DFSN, EDDL…EQID, EELK…EETE, and SKTQ…NNNN. Low complexity predominate over residues 73 to 83; sequence NENTSNVNKIK. Basic and acidic residues-rich tracts occupy residues 435–460 and 474–483; these read KKEE…EEYR and MKMHEKEQID. The stretch at 475 to 736 forms a coiled coil; the sequence is KMHEKEQIDD…EMRLQLIRSK (262 aa). Positions 735 to 745 are enriched in polar residues; that stretch reads SKTQGTSSTFI. Positions 751–765 are enriched in basic and acidic residues; the sequence is KHLESLKEEKKKEVK. Residues 773 to 786 show a composition bias toward low complexity; the sequence is NNNNNNNNNNNNNN.

This is an uncharacterized protein from Plasmodium falciparum (isolate 3D7).